The sequence spans 1020 residues: Inner tegument protein (1020 aa).

The interaction with large tegument protein stretch occupies residues 539 to 1020; the sequence is WGVRIPDRDT…EIDAIFNNTK (482 aa).

This sequence belongs to the herpesviridae inner tegument protein family. As to quaternary structure, interacts (via C-terminus) with the large tegument protein/LTP (via N-terminus).

It is found in the virion tegument. It localises to the host cytoplasm. The protein resides in the host nucleus. Its subcellular location is the host Golgi apparatus. The protein localises to the host trans-Golgi network. Functionally, plays an essential role in cytoplasmic secondary envelopment during viral egress. Interacts with the capsid via the large tegument protein/LTP and participates in its transport to the host trans-Golgi network (TGN) where secondary envelopment occurs. Modulates tegumentation and capsid accumulation at the viral assembly complex. The sequence is that of Inner tegument protein from Equine herpesvirus 1 (strain Ab4p) (EHV-1).